We begin with the raw amino-acid sequence, 264 residues long: Thymidylate synthase (264 aa).

DUMP is bound at residue Arg21. His51 provides a ligand contact to (6R)-5,10-methylene-5,6,7,8-tetrahydrofolate. 126 to 127 (RR) provides a ligand contact to dUMP. Cys146 acts as the Nucleophile in catalysis. DUMP contacts are provided by residues 166 to 169 (RSAD), Asn177, and 207 to 209 (HLY). Asp169 contacts (6R)-5,10-methylene-5,6,7,8-tetrahydrofolate. Residue Ala263 coordinates (6R)-5,10-methylene-5,6,7,8-tetrahydrofolate.

Belongs to the thymidylate synthase family. Bacterial-type ThyA subfamily. Homodimer.

The protein localises to the cytoplasm. It catalyses the reaction dUMP + (6R)-5,10-methylene-5,6,7,8-tetrahydrofolate = 7,8-dihydrofolate + dTMP. The protein operates within pyrimidine metabolism; dTTP biosynthesis. In terms of biological role, catalyzes the reductive methylation of 2'-deoxyuridine-5'-monophosphate (dUMP) to 2'-deoxythymidine-5'-monophosphate (dTMP) while utilizing 5,10-methylenetetrahydrofolate (mTHF) as the methyl donor and reductant in the reaction, yielding dihydrofolate (DHF) as a by-product. This enzymatic reaction provides an intracellular de novo source of dTMP, an essential precursor for DNA biosynthesis. The polypeptide is Thymidylate synthase (Cupriavidus necator (strain ATCC 17699 / DSM 428 / KCTC 22496 / NCIMB 10442 / H16 / Stanier 337) (Ralstonia eutropha)).